Consider the following 309-residue polypeptide: Putative proline iminopeptidase (309 aa).

Residues 33-291 (LYVHGGPGSG…LYVTNNAGHS (259 aa)) enclose the AB hydrolase-1 domain. Serine 105 functions as the Nucleophile in the catalytic mechanism. Aspartate 262 is a catalytic residue. Catalysis depends on histidine 290, which acts as the Proton donor.

This sequence belongs to the peptidase S33 family.

The protein resides in the cytoplasm. The catalysed reaction is Release of N-terminal proline from a peptide.. Functionally, specifically catalyzes the removal of N-terminal proline residues from peptides. This chain is Putative proline iminopeptidase (pip), found in Mycoplasma pneumoniae (strain ATCC 29342 / M129 / Subtype 1) (Mycoplasmoides pneumoniae).